A 441-amino-acid polypeptide reads, in one-letter code: MDDDDFGGFEAAETFDGGSGETQTTSPAIPWAAFPAVSGVHLSPSSPEIVLDRDHSSSIGCLSSDAIISSPENTHAANSIVSQTIPKAQIQQSTHTHLDISLFPLGLTDEKSNGTIALVDDSEDPGANVSNIQLQQKISSLEIKLKVSEEEKQRIKQDVESLMEKHNVLEKGFLKEKEQEAISFQDRYKELQEKHKQELEDMRKAGHEALSIIVDEYKALLQSSVKQQVEAIEKQYISAIEKQAHKCEELLNAQHQRLLEMLDTEKELLKEKIKEALIQQSQEQKEILEKCLEEERQRNKEALVSAAKLEKEAVKDAVLKVVEEERKNLEKAHAEERELWKTEHAKDQEKVSQEIQKAIQEQRKISQETVKAAIIEEQKRSEKAVEEAVKRTRDELIEYIKEQKRLDQVIRQRSLSSLELFLSCAQKQLSALIATEPVDIE.

Residues 1–16 (MDDDDFGGFEAAETFD) form a GGA1-binding motif region. The segment at 1 to 26 (MDDDDFGGFEAAETFDGGSGETQTTS) is disordered. A phosphoserine mark is found at Ser43 and Ser46. Coiled coils occupy residues 130-209 (SNIQ…GHEA) and 249-407 (ELLN…KRLD). Residues 210–413 (LSIIVDEYKA…KRLDQVIRQR (204 aa)) are homodimerization.

As to quaternary structure, homodimer. Interacts with GGA1, GGA2 and AP1G1. In terms of tissue distribution, widely expressed.

It localises to the membrane. It is found in the golgi apparatus. Its subcellular location is the trans-Golgi network membrane. The protein localises to the trans-Golgi network. Functionally, involved in the regulation of membrane traffic through the trans-Golgi network (TGN). Functions in close cooperation with the GGAs in the sorting of hydrolases to lysosomes. The chain is Coiled-coil domain-containing protein 91 (CCDC91) from Homo sapiens (Human).